The sequence spans 270 residues: tRNA pseudouridine synthase A (270 aa).

Aspartate 54 acts as the Nucleophile in catalysis. Tyrosine 112 serves as a coordination point for substrate.

The protein belongs to the tRNA pseudouridine synthase TruA family. Homodimer.

It carries out the reaction uridine(38/39/40) in tRNA = pseudouridine(38/39/40) in tRNA. In terms of biological role, formation of pseudouridine at positions 38, 39 and 40 in the anticodon stem and loop of transfer RNAs. The protein is tRNA pseudouridine synthase A of Bordetella bronchiseptica (strain ATCC BAA-588 / NCTC 13252 / RB50) (Alcaligenes bronchisepticus).